A 274-amino-acid polypeptide reads, in one-letter code: tRNA pseudouridine synthase A (274 aa).

The Nucleophile role is filled by Asp-57. Substrate is bound at residue Tyr-115.

Belongs to the tRNA pseudouridine synthase TruA family. In terms of assembly, homodimer.

The enzyme catalyses uridine(38/39/40) in tRNA = pseudouridine(38/39/40) in tRNA. Formation of pseudouridine at positions 38, 39 and 40 in the anticodon stem and loop of transfer RNAs. In Frankia casuarinae (strain DSM 45818 / CECT 9043 / HFP020203 / CcI3), this protein is tRNA pseudouridine synthase A.